The chain runs to 240 residues: Agamous-like MADS-box protein AGL16 (240 aa).

Residues 1–61 enclose the MADS-box domain; it reads MGRGKIAIKR…GRLYDFSSSS (61 aa). Positions 86–176 constitute a K-box domain; it reads IQFWQKEAAI…HKKVNLMHQQ (91 aa).

As to quaternary structure, homodimer. Interacts with AGL15, AGL24, AP1, AGL6, AG, AGL1, AGL11, AGL5, SEP3, SEP1, AGL63, AGL14, SOC1 and AGL21. Interacts with AGL63. Interacts with SVP. As to expression, expressed at high levels in leaves, moderate levels in roots, seedlings and stems, and at low levels in flowers, pollen and siliques. Accumulates in leaf guard cells and trichomes. Also present in epidermal cells of roots. Expressed in mature guard cells.

The protein localises to the nucleus. Functionally, probable transcription factor involved in the regulation of flowering time in long-day photoperiod. Participates in the repression of FT expression and floral transition, by interacting closely with the FLC-SVP pathways. Functions in the satellite meristemoid lineage of stomatal development. In Arabidopsis thaliana (Mouse-ear cress), this protein is Agamous-like MADS-box protein AGL16 (AGL16).